Consider the following 250-residue polypeptide: LexA repressor (250 aa).

Positions 1–21 (MTSQERGTRRGDTRGNVRDFP) are enriched in basic and acidic residues. The tract at residues 1–33 (MTSQERGTRRGDTRGNVRDFPDSPADASGLTQR) is disordered. Residues 54-74 (VREIGEAVGLTSTSSVAHQLK) constitute a DNA-binding region (H-T-H motif). Residues serine 174 and lysine 211 each act as for autocatalytic cleavage activity in the active site.

Belongs to the peptidase S24 family. Homodimer.

The catalysed reaction is Hydrolysis of Ala-|-Gly bond in repressor LexA.. In terms of biological role, represses a number of genes involved in the response to DNA damage (SOS response), including recA and lexA. In the presence of single-stranded DNA, RecA interacts with LexA causing an autocatalytic cleavage which disrupts the DNA-binding part of LexA, leading to derepression of the SOS regulon and eventually DNA repair. This chain is LexA repressor, found in Parafrankia sp. (strain EAN1pec).